A 358-amino-acid polypeptide reads, in one-letter code: tRNA-specific 2-thiouridylase MnmA 2 (358 aa).

Residues 11–18 and Met37 contribute to the ATP site; that span reads GMSGGVDS. The active-site Nucleophile is Cys106. Residues Cys106 and Cys202 are joined by a disulfide bond. Gly130 contacts ATP. The segment at 152-154 is interaction with tRNA; sequence KDQ. Residue Cys202 is the Cysteine persulfide intermediate of the active site. The tract at residues 308 to 309 is interaction with tRNA; that stretch reads RY.

This sequence belongs to the MnmA/TRMU family.

It localises to the cytoplasm. It carries out the reaction S-sulfanyl-L-cysteinyl-[protein] + uridine(34) in tRNA + AH2 + ATP = 2-thiouridine(34) in tRNA + L-cysteinyl-[protein] + A + AMP + diphosphate + H(+). Catalyzes the 2-thiolation of uridine at the wobble position (U34) of tRNA, leading to the formation of s(2)U34. The chain is tRNA-specific 2-thiouridylase MnmA 2 from Clostridium tetani (strain Massachusetts / E88).